The chain runs to 458 residues: Light-independent protochlorophyllide reductase subunit N (458 aa).

3 residues coordinate [4Fe-4S] cluster: cysteine 22, cysteine 47, and cysteine 107.

Belongs to the BchN/ChlN family. As to quaternary structure, protochlorophyllide reductase is composed of three subunits; ChlL, ChlN and ChlB. Forms a heterotetramer of two ChlB and two ChlN subunits. [4Fe-4S] cluster serves as cofactor.

Its subcellular location is the plastid. The protein localises to the chloroplast. It catalyses the reaction chlorophyllide a + oxidized 2[4Fe-4S]-[ferredoxin] + 2 ADP + 2 phosphate = protochlorophyllide a + reduced 2[4Fe-4S]-[ferredoxin] + 2 ATP + 2 H2O. Its pathway is porphyrin-containing compound metabolism; chlorophyll biosynthesis (light-independent). Component of the dark-operative protochlorophyllide reductase (DPOR) that uses Mg-ATP and reduced ferredoxin to reduce ring D of protochlorophyllide (Pchlide) to form chlorophyllide a (Chlide). This reaction is light-independent. The NB-protein (ChlN-ChlB) is the catalytic component of the complex. This is Light-independent protochlorophyllide reductase subunit N from Chaetosphaeridium globosum (Charophycean green alga).